Reading from the N-terminus, the 690-residue chain is Proprotein convertase subtilisin/kexin type 9 (690 aa).

A signal peptide spans 1–28; it reads MGTVRSRRLWWPLPLLLLLLRGPAGARA. The propeptide occupies 29 to 150; it reads QEDDDGDYEE…IEEDSYVFAQ (122 aa). Sulfotyrosine is present on Tyr-36. Residue Ser-45 is modified to Phosphoserine. One can recognise an Inhibitor I9 domain in the interval 75 to 147; it reads TYVVVLKEET…VDYIEEDSYV (73 aa). The Peptidase S8 domain occupies 153-459; it reads PWNLERITPA…GWQLFCRTVW (307 aa). Catalysis depends on charge relay system residues Asp-184 and His-224. Intrachain disulfides connect Cys-221–Cys-253 and Cys-321–Cys-356. The Charge relay system role is filled by Ser-384. Positions 448–690 are C-terminal domain; it reads GAGWQLFCRT…HLAQASQELQ (243 aa). 3 cysteine pairs are disulfide-bonded: Cys-455–Cys-525, Cys-475–Cys-524, and Cys-484–Cys-507. Residue Asn-531 is glycosylated (N-linked (GlcNAc...) asparagine). Intrachain disulfides connect Cys-532/Cys-599, Cys-550/Cys-598, Cys-560/Cys-586, Cys-606/Cys-677, Cys-624/Cys-676, and Cys-633/Cys-652. Ser-686 carries the phosphoserine modification.

Belongs to the peptidase S8 family. As to quaternary structure, monomer. Can self-associate to form dimers and higher multimers which may have increased LDLR degrading activity. The precursor protein but not the mature protein may form multimers. Interacts with APOB, VLDLR, LRP8/APOER2 and BACE1. The full-length immature form (pro-PCSK9) interacts with SCNN1A, SCNN1B and SCNN1G. The pro-PCSK9 form (via C-terminal domain) interacts with LDLR. Interacts (via the C-terminal domain) with ANXA2 (via repeat Annexin 1); the interaction inhibits the degradation of LDLR. The cofactor is Ca(2+). In terms of processing, cleavage by furin and PCSK5 generates a truncated inactive protein that is unable to induce LDLR degradation. Post-translationally, undergoes autocatalytic cleavage in the endoplasmic reticulum to release the propeptide from the N-terminus and the cleavage of the propeptide is strictly required for its maturation and activation. The cleaved propeptide however remains associated with the catalytic domain through non-covalent interactions, preventing potential substrates from accessing its active site. As a result, it is secreted from cells as a propeptide-containing, enzymatically inactive protein. Phosphorylation protects the propeptide against proteolysis.

It localises to the cytoplasm. The protein resides in the secreted. Its subcellular location is the endosome. It is found in the lysosome. The protein localises to the cell surface. It localises to the endoplasmic reticulum. The protein resides in the golgi apparatus. Its activity is regulated as follows. Its proteolytic activity is autoinhibited by the non-covalent binding of the propeptide to the catalytic domain. Inhibited by EGTA. Its function is as follows. Crucial player in the regulation of plasma cholesterol homeostasis. Binds to low-density lipid receptor family members: low density lipoprotein receptor (LDLR), very low density lipoprotein receptor (VLDLR), apolipoprotein E receptor (LRP1/APOER) and apolipoprotein receptor 2 (LRP8/APOER2), and promotes their degradation in intracellular acidic compartments. Acts via a non-proteolytic mechanism to enhance the degradation of the hepatic LDLR through a clathrin LDLRAP1/ARH-mediated pathway. May prevent the recycling of LDLR from endosomes to the cell surface or direct it to lysosomes for degradation. Can induce ubiquitination of LDLR leading to its subsequent degradation. Inhibits intracellular degradation of APOB via the autophagosome/lysosome pathway in a LDLR-independent manner. Involved in the disposal of non-acetylated intermediates of BACE1 in the early secretory pathway. Inhibits epithelial Na(+) channel (ENaC)-mediated Na(+) absorption by reducing ENaC surface expression primarily by increasing its proteasomal degradation. Regulates neuronal apoptosis via modulation of LRP8/APOER2 levels and related anti-apoptotic signaling pathways. This Ateles geoffroyi (Black-handed spider monkey) protein is Proprotein convertase subtilisin/kexin type 9 (PCSK9).